A 148-amino-acid chain; its full sequence is uncharacterized protein (148 aa).

This is an uncharacterized protein from Acanthamoeba polyphaga mimivirus (APMV).